Here is a 311-residue protein sequence, read N- to C-terminus: Aldose reductase B (311 aa).

Aspartate 13–glycine 23 is an NADP(+) binding site. Tyrosine 54 functions as the Proton donor in the catalytic mechanism. Residue histidine 116 coordinates substrate. An NADP(+)-binding site is contributed by serine 219–asparagine 273.

It belongs to the aldo/keto reductase family.

The enzyme catalyses an alditol + NAD(+) = an aldose + NADH + H(+). It carries out the reaction an alditol + NADP(+) = an aldose + NADPH + H(+). Its function is as follows. Catalyzes the NADPH-dependent reduction of a wide variety of carbonyl-containing compounds to their corresponding alcohols with a broad range of catalytic efficiencies. This is Aldose reductase B (alrB) from Dictyostelium discoideum (Social amoeba).